The sequence spans 355 residues: Uroporphyrinogen decarboxylase (355 aa).

Substrate contacts are provided by residues 27 to 31 (RQAGR), Asp77, Tyr154, Thr209, and His328.

This sequence belongs to the uroporphyrinogen decarboxylase family. In terms of assembly, homodimer.

It localises to the cytoplasm. The enzyme catalyses uroporphyrinogen III + 4 H(+) = coproporphyrinogen III + 4 CO2. The protein operates within porphyrin-containing compound metabolism; protoporphyrin-IX biosynthesis; coproporphyrinogen-III from 5-aminolevulinate: step 4/4. Functionally, catalyzes the decarboxylation of four acetate groups of uroporphyrinogen-III to yield coproporphyrinogen-III. In Dechloromonas aromatica (strain RCB), this protein is Uroporphyrinogen decarboxylase.